The sequence spans 563 residues: MRRMKALTAAMTAALLVSGCSTLPSNTDPQVLRSFNADDQSAEVAGPTPGADPDILLRGFFSAAAFPAQQYQASRAYLTEEANRNWDPTATTVVVDRIDLNTQAGATEDERRIVIRGTQVGTLGSGGVYRPENSELVAEIVMRRVDNEWRIDDLPDGVVLERTEMRNHYTPKNVYFFDPSGQVLVGDRRWIHNAVQSLDTTLMSLLVSGPSQYLAPGVVHQLPSGASFVGFSDGAYQFTGLSSMNEEERLSFATQVVWMLAHAEIPGPYAIFADGSPLVADFPVLSIEDVAEFNPEAYTNAVSTLFSLRDGVVSRVSSGTVTPLTGFLGSGDIDSVAISTSANVAAAVRGNESPRLSVGAPEGSYTDVLTADTITRPTFEYAANALWAVADGDTPVRVTRSSTTRELVQTEVEITLPEGVTGAISEFQLSRTGVRAAMIIEGRVYMGVVTRPSPGERGVTNIVEVAPALRETALSLAWRQDGSLLVGTSMPELPIWRVEIDGSGASALPSGNINAPVVSVASSASTIYATDAHALLQLPASDNTIWREVPGLLGVRSAAVVAY.

Positions 1–19 are cleaved as a signal peptide; that stretch reads MRRMKALTAAMTAALLVSG. C20 carries the N-palmitoyl cysteine lipid modification. The S-diacylglycerol cysteine moiety is linked to residue C20.

It belongs to the LpqB lipoprotein family.

It is found in the cell membrane. The sequence is that of Lipoprotein LpqB from Corynebacterium efficiens (strain DSM 44549 / YS-314 / AJ 12310 / JCM 11189 / NBRC 100395).